We begin with the raw amino-acid sequence, 267 residues long: Hydroxyethylthiazole kinase (267 aa).

Met-46 provides a ligand contact to substrate. 2 residues coordinate ATP: Arg-122 and Ser-168. Gly-195 contacts substrate.

Belongs to the Thz kinase family. Mg(2+) is required as a cofactor.

It catalyses the reaction 5-(2-hydroxyethyl)-4-methylthiazole + ATP = 4-methyl-5-(2-phosphooxyethyl)-thiazole + ADP + H(+). It participates in cofactor biosynthesis; thiamine diphosphate biosynthesis; 4-methyl-5-(2-phosphoethyl)-thiazole from 5-(2-hydroxyethyl)-4-methylthiazole: step 1/1. Catalyzes the phosphorylation of the hydroxyl group of 4-methyl-5-beta-hydroxyethylthiazole (THZ). This is Hydroxyethylthiazole kinase from Nitratidesulfovibrio vulgaris (strain DSM 19637 / Miyazaki F) (Desulfovibrio vulgaris).